Here is a 142-residue protein sequence, read N- to C-terminus: Nucleoside diphosphate kinase (142 aa).

Residues lysine 11, phenylalanine 59, arginine 87, threonine 93, arginine 104, and asparagine 114 each coordinate ATP. The active-site Pros-phosphohistidine intermediate is the histidine 117.

It belongs to the NDK family. In terms of assembly, homotetramer. It depends on Mg(2+) as a cofactor.

Its subcellular location is the cytoplasm. It carries out the reaction a 2'-deoxyribonucleoside 5'-diphosphate + ATP = a 2'-deoxyribonucleoside 5'-triphosphate + ADP. The enzyme catalyses a ribonucleoside 5'-diphosphate + ATP = a ribonucleoside 5'-triphosphate + ADP. Major role in the synthesis of nucleoside triphosphates other than ATP. The ATP gamma phosphate is transferred to the NDP beta phosphate via a ping-pong mechanism, using a phosphorylated active-site intermediate. The chain is Nucleoside diphosphate kinase from Hahella chejuensis (strain KCTC 2396).